A 117-amino-acid polypeptide reads, in one-letter code: Ribonuclease P protein component (117 aa).

This sequence belongs to the RnpA family. In terms of assembly, consists of a catalytic RNA component (M1 or rnpB) and a protein subunit.

The enzyme catalyses Endonucleolytic cleavage of RNA, removing 5'-extranucleotides from tRNA precursor.. RNaseP catalyzes the removal of the 5'-leader sequence from pre-tRNA to produce the mature 5'-terminus. It can also cleave other RNA substrates such as 4.5S RNA. The protein component plays an auxiliary but essential role in vivo by binding to the 5'-leader sequence and broadening the substrate specificity of the ribozyme. The polypeptide is Ribonuclease P protein component (Limosilactobacillus reuteri subsp. reuteri (strain JCM 1112) (Lactobacillus reuteri)).